Consider the following 153-residue polypeptide: Acetylacetone-cleaving enzyme (153 aa).

As to quaternary structure, homotetramer. The cofactor is Fe cation.

It catalyses the reaction acetylacetone + O2 = methylglyoxal + acetate + H(+). It functions in the pathway xenobiotic degradation; acetylacetone degradation. Cleaves acetylacetone to equimolar amounts of methylglyoxal and acetate, consuming one equivalent of molecular oxygen. This is Acetylacetone-cleaving enzyme (dke1) from Acinetobacter johnsonii.